The following is a 197-amino-acid chain: Adrenodoxin-like protein 2, mitochondrial (197 aa).

Residues 1–74 (MVFHRLSRLG…TSFSTTSEKG (74 aa)) constitute a mitochondrion transit peptide. The region spanning 81 to 184 (INVTFVDKDG…GVRLAIPSAT (104 aa)) is the 2Fe-2S ferredoxin-type domain. Positions 118, 124, 127, and 165 each coordinate [2Fe-2S] cluster.

The protein belongs to the adrenodoxin/putidaredoxin family. Requires [2Fe-2S] cluster as cofactor.

It localises to the mitochondrion. In terms of biological role, associates with the adrenodoxin reductase MFDR to form an efficient low potential electron transfer chain that is able to reduce cytochrome C. The sequence is that of Adrenodoxin-like protein 2, mitochondrial from Arabidopsis thaliana (Mouse-ear cress).